A 240-amino-acid polypeptide reads, in one-letter code: ATP synthase subunit a 1 (240 aa).

The next 5 helical transmembrane spans lie at 23–43, 82–102, 120–140, 186–206, and 207–227; these read GQVL…SVLA, VPFI…GALF, DINT…YAGF, LVVA…VMLL, and GLFT…AYIH.

Belongs to the ATPase A chain family. As to quaternary structure, F-type ATPases have 2 components, CF(1) - the catalytic core - and CF(0) - the membrane proton channel. CF(1) has five subunits: alpha(3), beta(3), gamma(1), delta(1), epsilon(1). CF(0) has four main subunits: a, b, b' and c.

It is found in the cellular thylakoid membrane. Its function is as follows. Key component of the proton channel; it plays a direct role in the translocation of protons across the membrane. The polypeptide is ATP synthase subunit a 1 (Acaryochloris marina (strain MBIC 11017)).